The chain runs to 503 residues: MHMSKSFLIISMGFVAVSVQAQTLTRDNGAPVGDNQNSITAGEHGSVLLQDVHLIQKLQRFARERIPERVVHARGTGAHGEFVASGDFSDLTLSAPFTSKGKITPVFVRFSTVIHSKGSPETLRDPRGFATKFYTEQGNWDLVGNNLPVFFIRDSIKFPDMVHSLKPSPVTNLQDPNRFFDFFSHEPGSTHMLTWVYTNLGTPASYRTMDGFGVHAYKWINQKGDVNYVKFHWKSLQGIESLRPDEVVKVQGQDFNHLTNDLYTQINAGNHPKWDLYVQVLTPEQLSKLDYNGLDATKVWLDVPEKKVGTMTLNKVPDNFFLETEQSAFAPSNLIPGIEPSEDRLLQGRLFAYADTQLYRLGANLFQLPINRPLVEVNSHNQEGASNSAQTASDINYQPSRKLELKEDPQFKAVQTQLVGSVQQKAISNPRNFYQAGVLYRSLNEQDKQDLITNLXGBLNKVTDKEIKATMVSHFYRADKDYGTRLARATNTDLKQVAKLAAM.

Residues 1–21 form the signal peptide; the sequence is MHMSKSFLIISMGFVAVSVQA. Active-site residues include histidine 72 and asparagine 145. Heme is bound at residue tyrosine 353.

The protein belongs to the catalase family. It depends on heme as a cofactor.

The protein resides in the periplasm. The enzyme catalyses 2 H2O2 = O2 + 2 H2O. In terms of biological role, decomposes hydrogen peroxide into water and oxygen; serves to protect cells from the toxic effects of hydrogen peroxide. This chain is Catalase, found in Vibrio cholerae serotype O1 (strain ATCC 39315 / El Tor Inaba N16961).